A 123-amino-acid polypeptide reads, in one-letter code: T-complex protein 1 subunit alpha (123 aa).

Residue Gly68 participates in ADP binding.

Belongs to the TCP-1 chaperonin family. In terms of assembly, component of the chaperonin-containing T-complex (TRiC), a hexadecamer composed of two identical back-to-back stacked rings enclosing a protein folding chamber. Each ring is made up of eight different subunits: TCP1/CCT1, CCT2, CCT3, CCT4, CCT5, CCT6A/CCT6, CCT7, CCT8. Interacts with PACRG. Interacts with GBA1. Interacts with DLEC1.

It is found in the cytoplasm. Its subcellular location is the cytosol. The protein resides in the cytoskeleton. The protein localises to the microtubule organizing center. It localises to the centrosome. The catalysed reaction is ATP + H2O = ADP + phosphate + H(+). Functionally, component of the chaperonin-containing T-complex (TRiC), a molecular chaperone complex that assists the folding of actin, tubulin and other proteins upon ATP hydrolysis. The TRiC complex mediates the folding of WRAP53/TCAB1, thereby regulating telomere maintenance. As part of the TRiC complex may play a role in the assembly of BBSome, a complex involved in ciliogenesis regulating transports vesicles to the cilia. The sequence is that of T-complex protein 1 subunit alpha from Mesocricetus auratus (Golden hamster).